We begin with the raw amino-acid sequence, 425 residues long: Phosphoribosylamine--glycine ligase (425 aa).

In terms of domain architecture, ATP-grasp spans lysine 107–aspartate 312. Valine 133–serine 193 provides a ligand contact to ATP. The disordered stretch occupies residues arginine 214–alanine 233. Positions 282 and 284 each coordinate Mg(2+).

The protein belongs to the GARS family. Mg(2+) serves as cofactor. Mn(2+) is required as a cofactor.

It carries out the reaction 5-phospho-beta-D-ribosylamine + glycine + ATP = N(1)-(5-phospho-beta-D-ribosyl)glycinamide + ADP + phosphate + H(+). It participates in purine metabolism; IMP biosynthesis via de novo pathway; N(1)-(5-phospho-D-ribosyl)glycinamide from 5-phospho-alpha-D-ribose 1-diphosphate: step 2/2. This Mesorhizobium japonicum (strain LMG 29417 / CECT 9101 / MAFF 303099) (Mesorhizobium loti (strain MAFF 303099)) protein is Phosphoribosylamine--glycine ligase.